The primary structure comprises 341 residues: Probable electron transfer flavoprotein subunit alpha, mitochondrial (341 aa).

285 to 313 is a binding site for FAD; it reads LYIAVGIDGAIQHLAGIKDSKVIAAINRD.

Belongs to the ETF alpha-subunit/FixB family. In terms of assembly, heterodimer of an alpha and a beta subunit. Requires FAD as cofactor.

The protein localises to the mitochondrion matrix. The electron transfer flavoprotein serves as a specific electron acceptor for several dehydrogenases, including five acyl-CoA dehydrogenases, glutaryl-CoA and sarcosine dehydrogenase. It transfers the electrons to the main mitochondrial respiratory chain via ETF-ubiquinone oxidoreductase (ETF dehydrogenase). This chain is Probable electron transfer flavoprotein subunit alpha, mitochondrial, found in Schizosaccharomyces pombe (strain 972 / ATCC 24843) (Fission yeast).